A 506-amino-acid chain; its full sequence is Tubby protein homolog (506 aa).

The segment at 36–244 (QKQKKKRQEP…PSPTAPEQPV (209 aa)) is disordered. Low complexity-rich tracts occupy residues 70–87 (LVESYLSSSGSTSYQVQE) and 101–116 (PTAPASAKRTKAAATA). Residues 196-206 (FDEDEEDEEEN) show a composition bias toward acidic residues. Low complexity-rich tracts occupy residues 207-221 (SSSSSQLNSNTRPSS) and 230-243 (EAASAPSPTAPEQP).

Belongs to the TUB family. As to quaternary structure, interacts with GNAQ. Interacts with TULP1.

The protein resides in the cytoplasm. Its subcellular location is the nucleus. It localises to the secreted. It is found in the cell membrane. Functions in signal transduction from heterotrimeric G protein-coupled receptors. Binds to membranes containing phosphatidylinositol 4,5-bisphosphate. Can bind DNA (in vitro). May contribute to the regulation of transcription in the nucleus. Could be involved in the hypothalamic regulation of body weight. Contribute to stimulation of phagocytosis of apoptotic retinal pigment epithelium (RPE) cells and macrophages. The sequence is that of Tubby protein homolog (TUB) from Homo sapiens (Human).